The following is a 456-amino-acid chain: Putrescine--pyruvate aminotransferase (456 aa).

Tyrosine 156 provides a ligand contact to substrate. Position 262 (aspartate 262) interacts with pyridoxal 5'-phosphate. The residue at position 291 (lysine 291) is an N6-(pyridoxal phosphate)lysine. Substrate is bound by residues glycine 322 and arginine 417.

The protein belongs to the class-III pyridoxal-phosphate-dependent aminotransferase family. The cofactor is pyridoxal 5'-phosphate.

The catalysed reaction is putrescine + pyruvate = 4-aminobutanal + L-alanine. The protein operates within amine and polyamine degradation; putrescine degradation; 4-aminobutanal from putrescine (transaminase route). In terms of biological role, involved in the putrescine catabolism. Catalyzes the transfer of the amino group from putrescine to pyruvate to yield 4-aminobutanal and alanine. This is Putrescine--pyruvate aminotransferase from Pseudomonas aeruginosa (strain ATCC 15692 / DSM 22644 / CIP 104116 / JCM 14847 / LMG 12228 / 1C / PRS 101 / PAO1).